The primary structure comprises 279 residues: Energy-coupling factor transporter ATP-binding protein EcfA (279 aa).

One can recognise an ABC transporter domain in the interval 4–239; it reads VETKDLYFRY…VETIRKANLR (236 aa). 37–44 provides a ligand contact to ATP; the sequence is GPNGAGKS.

This sequence belongs to the ABC transporter superfamily. Energy-coupling factor EcfA family. In terms of assembly, forms a stable energy-coupling factor (ECF) transporter complex composed of 2 membrane-embedded substrate-binding proteins (S component), 2 ATP-binding proteins (A component) and 2 transmembrane proteins (T component).

The protein localises to the cell membrane. In terms of biological role, ATP-binding (A) component of a common energy-coupling factor (ECF) ABC-transporter complex. Unlike classic ABC transporters this ECF transporter provides the energy necessary to transport a number of different substrates. The chain is Energy-coupling factor transporter ATP-binding protein EcfA from Methanocaldococcus jannaschii (strain ATCC 43067 / DSM 2661 / JAL-1 / JCM 10045 / NBRC 100440) (Methanococcus jannaschii).